A 196-amino-acid chain; its full sequence is NADH dehydrogenase [ubiquinone] 1 alpha subcomplex assembly factor 3 (196 aa).

Residues 1–93 (MIARTLRTVG…RSVLSWNVNS (93 aa)) constitute a mitochondrion transit peptide.

This sequence belongs to the NDUFAF3 family. In terms of assembly, together with NdufAF4 associates with mitochondrial complex I assembly intermediates during its biogenesis.

The protein localises to the mitochondrion. Involved in the assembly of mitochondrial NADH:ubiquinone oxidoreductase complex (complex I). Together with NdufAF4, involved in biogenesis of complex 1 modules N, Q and P-peripheral, but not the P-distal module. Required for recruitment of the complex I assembly factor Timmdc1 to complex 1 assembly intermediates. This is NADH dehydrogenase [ubiquinone] 1 alpha subcomplex assembly factor 3 from Drosophila melanogaster (Fruit fly).